A 323-amino-acid polypeptide reads, in one-letter code: tRNA-dihydrouridine synthase B (323 aa).

FMN-binding positions include 16 to 18 (PMA) and glutamine 70. Cysteine 100 (proton donor) is an active-site residue. Residues lysine 139, 200–202 (NGD), and 224–225 (GR) contribute to the FMN site.

This sequence belongs to the Dus family. DusB subfamily. Requires FMN as cofactor.

It catalyses the reaction a 5,6-dihydrouridine in tRNA + NAD(+) = a uridine in tRNA + NADH + H(+). The enzyme catalyses a 5,6-dihydrouridine in tRNA + NADP(+) = a uridine in tRNA + NADPH + H(+). Functionally, catalyzes the synthesis of 5,6-dihydrouridine (D), a modified base found in the D-loop of most tRNAs, via the reduction of the C5-C6 double bond in target uridines. This is tRNA-dihydrouridine synthase B from Proteus vulgaris.